The sequence spans 187 residues: UPF0301 protein WIGBR1650 (187 aa).

This sequence belongs to the UPF0301 (AlgH) family.

The chain is UPF0301 protein WIGBR1650 from Wigglesworthia glossinidia brevipalpis.